The chain runs to 276 residues: Large ribosomal subunit protein uL2c (276 aa).

Positions 223–254 are disordered; it reads VVKNPIDHPHGGGEGRSPIGRAKPVTPWGQPA.

It belongs to the universal ribosomal protein uL2 family. As to quaternary structure, part of the 50S ribosomal subunit.

It is found in the plastid. The protein localises to the chloroplast. This Emiliania huxleyi (Coccolithophore) protein is Large ribosomal subunit protein uL2c (rpl2).